We begin with the raw amino-acid sequence, 311 residues long: DNA repair and recombination protein RadA (311 aa).

104-111 (GEFGSGKS) is a binding site for ATP.

This sequence belongs to the eukaryotic RecA-like protein family.

Involved in DNA repair and in homologous recombination. Binds and assemble on single-stranded DNA to form a nucleoprotein filament. Hydrolyzes ATP in a ssDNA-dependent manner and promotes DNA strand exchange between homologous DNA molecules. This chain is DNA repair and recombination protein RadA, found in Methanobrevibacter smithii (strain ATCC 35061 / DSM 861 / OCM 144 / PS).